The sequence spans 355 residues: MAPPGRRECAFPSRRFPGLLLAALVLLLSSFSDACEEPPTFEAMELIGKPKPYYDIGERVDYKCKKGYFYIPPLATHTICDRNHTWLPVSDDACYRETCPYIGDPLNGQAILANGTYEFGYQIHFICNEGYYLIGNEILYCELKGSVAIWGGKPPICEKVLCTPPPKIKNGKHTFSEVEVFEYLDAVTYSCDPAPGPDPFSLIGESTIYCGDNSVWSHAAPECKVVKCRFPVVENGKQISGFGKKFYYKATVMFECDKGFYLNGSNTIVCDSNSTWDPPVPKCLKGYPKPEEGILDSLDDWVIALIVIAIVVGVAVICAVLYGYLQRRKKKGNADGGAEYATYQTKSTTPAEQRG.

Positions 1 to 34 (MAPPGRRECAFPSRRFPGLLLAALVLLLSSFSDA) are cleaved as a signal peptide. Sushi domains are found at residues 35-96 (CEEP…ACYR), 97-159 (ETCP…ICEK), 160-225 (VLCT…ECKV), and 226-285 (VKCR…KCLK). Residues 35–300 (CEEPPTFEAM…EEGILDSLDD (266 aa)) lie on the Extracellular side of the membrane. 6 cysteine pairs are disulfide-bonded: C99–C141, C127–C157, C162–C210, C191–C223, C228–C270, and C256–C283. A glycan (N-linked (GlcNAc...) asparagine) is linked at N114. An O-linked (GalNAc...) threonine glycan is attached at T163. The N-linked (GlcNAc...) asparagine glycan is linked to N263. The helical transmembrane segment at 301-321 (WVIALIVIAIVVGVAVICAVL) threads the bilayer. At 322 to 355 (YGYLQRRKKKGNADGGAEYATYQTKSTTPAEQRG) the chain is on the cytoplasmic side.

As to quaternary structure, interacts with C3b. Interacts with C4b. Interacts with moesin/MSN.

The protein resides in the cytoplasmic vesicle. The protein localises to the secretory vesicle. Its subcellular location is the acrosome inner membrane. Its function is as follows. Acts as a cofactor for complement factor I, a serine protease which protects autologous cells against complement-mediated injury by cleaving C3b and C4b deposited on host tissue. May be involved in the fusion of the spermatozoa with the oocyte during fertilization. Also acts as a costimulatory factor for T-cells which induces the differentiation of CD4+ into T-regulatory 1 cells. T-regulatory 1 cells suppress immune responses by secreting interleukin-10, and therefore are thought to prevent autoimmunity. The polypeptide is Membrane cofactor protein (CD46) (Pongo abelii (Sumatran orangutan)).